We begin with the raw amino-acid sequence, 159 residues long: Putative 4-hydroxy-4-methyl-2-oxoglutarate aldolase (159 aa).

Residues 75 to 78 (GDQL) and R97 each bind substrate. An a divalent metal cation-binding site is contributed by D98.

Belongs to the class II aldolase/RraA-like family. As to quaternary structure, homotrimer. The cofactor is a divalent metal cation.

The enzyme catalyses 4-hydroxy-4-methyl-2-oxoglutarate = 2 pyruvate. It carries out the reaction oxaloacetate + H(+) = pyruvate + CO2. Functionally, catalyzes the aldol cleavage of 4-hydroxy-4-methyl-2-oxoglutarate (HMG) into 2 molecules of pyruvate. Also contains a secondary oxaloacetate (OAA) decarboxylase activity due to the common pyruvate enolate transition state formed following C-C bond cleavage in the retro-aldol and decarboxylation reactions. This chain is Putative 4-hydroxy-4-methyl-2-oxoglutarate aldolase, found in Aromatoleum aromaticum (strain DSM 19018 / LMG 30748 / EbN1) (Azoarcus sp. (strain EbN1)).